The sequence spans 1030 residues: Protein phosphatase 1 regulatory subunit 12A (1030 aa).

Positions 35–38 (KVKF) match the KVKF motif motif. ANK repeat units follow at residues 39-68 (DDGA…DINY), 72-101 (DGLT…NINQ), 105-134 (EGWI…HVGA), 138-164 (EGDT…RQGV), 198-227 (SGGT…DVNI), and 231-260 (DGWT…DMEM). (3S)-3-hydroxyasparagine; by HIF1AN; partial occurs at positions 67 and 100. The residue at position 226 (N226) is a (3S)-3-hydroxyasparagine; by HIF1AN; partial. Disordered regions lie at residues 290-628 (LHSE…SVPT) and 643-928 (ASTT…EKDD). A compositionally biased stretch (basic and acidic residues) spans 291-300 (HSEKRDKKSP). A Phosphoserine modification is found at S299. Residues 302 to 316 (IESTANMDNNQSQKT) show a composition bias toward polar residues. Residues 318–340 (KNKETLIIEPEKNASRIESLEQE) are compositionally biased toward basic and acidic residues. Residues 357-369 (SEEDEEDDSESEA) are compositionally biased toward acidic residues. Residues 385–402 (TSSTQAAPVAVTTPTVSS) show a composition bias toward low complexity. Phosphoserine occurs at positions 422 and 432. Basic and acidic residues predominate over residues 422-432 (SPKEEERKDES). At T443 the chain carries Phosphothreonine. At S445 the chain carries Phosphoserine; by NUAK1. A Phosphotyrosine modification is found at Y446. Over residues 469 to 480 (RSASSPRLSSSL) the composition is skewed to low complexity. A Phosphoserine; by NUAK1 modification is found at S472. A Phosphoserine; by CDK1 modification is found at S473. S477 bears the Phosphoserine mark. A compositionally biased stretch (basic and acidic residues) spans 481–491 (DNKEKEKDSKG). 2 positions are modified to phosphoserine: S507 and S509. The segment covering 540 to 551 (NSSVNEGSTYHK) has biased composition (polar residues). The span at 564–610 (SSSVPSTTSTPTVTSAAGLQKSLLSSTSTTTKITTGSSSAGTQSSTS) shows a compositional bias: low complexity. Phosphoserine is present on residues S601 and S618. Residues 614–625 (WAEDSTEKEKDS) show a composition bias toward basic and acidic residues. Residues 643 to 660 (ASTTTLTTTTAGTVSSTT) show a composition bias toward low complexity. The segment covering 673–682 (VRDEESESQR) has biased composition (basic and acidic residues). The interval 682–864 (RKARSRQARQ…VSFWTQDSDE (183 aa)) is interaction with ROCK2. Residues 683 to 693 (KARSRQARQSR) are compositionally biased toward basic residues. A phosphoserine; by PKA and PKG; in vitro mark is found at S692 and S695. A Phosphothreonine; by ROCK1, ROCK2, CDC42BP, ZIPK/DAPK3 and RAF1 modification is found at T696. The segment covering 718–767 (RTREQENEEKEKEEKEKQDKEKQEEKKESETSREDEYKQKYSRTYDETYQ) has biased composition (basic and acidic residues). Residues 773–795 (STSSSTTPSSSLSTMSSSLYASS) are compositionally biased toward low complexity. The span at 796–810 (QLNRPNSLVGITSAY) shows a compositional bias: polar residues. At S802 the chain carries Phosphoserine. Basic and acidic residues predominate over residues 814 to 840 (ITKENEREGEKREEEKEGEDKSQPKSI). Over residues 841–852 (RERRRPREKRRS) the composition is skewed to basic residues. The residue at position 852 (S852) is a Phosphoserine; by ROCK2. Acidic residues predominate over residues 861–875 (DSDENEQEQQSDTEE). Residues S862 and S871 each carry the phosphoserine modification. Over residues 884–897 (TDSISRYETSSTSA) the composition is skewed to polar residues. Phosphoserine occurs at positions 903 and 908. Low complexity predominate over residues 903-913 (SLLGRSGSYSY). Position 910 is a phosphoserine; by NUAK1 (S910). The segment covering 914–928 (LEERKPYSSRLEKDD) has biased composition (basic and acidic residues). S995 carries the post-translational modification Phosphoserine.

In terms of assembly, PP1 comprises a catalytic subunit, PPP1CA, PPP1CB or PPP1CC, and one or several targeting or regulatory subunits. PPP1R12A mediates binding to myosin. Interacts with ARHA and CIT. Binds PPP1R12B, ROCK1 and IL16. Interacts directly with PRKG1. Non-covalent dimer of 2 dimers; PRKG1-PRKG1 and PPP1R12A-PPP1R12A. Interacts with SMTNL1. Interacts with PPP1CB; the interaction is direct. Interacts (when phosphorylated at Ser-445, Ser-472 and Ser-910) with 14-3-3. Interacts with ROCK1 and ROCK2. Interacts with isoform 1 and isoform 2 of ZIPK/DAPK3. Interacts with RAF1. Interacts with HIF1AN. Interacts with NCKAP1L. Post-translationally, phosphorylated by CIT (Rho-associated kinase). Phosphorylated cooperatively by ROCK1 and CDC42BP on Thr-696. Phosphorylated on upon DNA damage, probably by ATM or ATR. In vitro, phosphorylation of Ser-695 by PKA and PKG appears to prevent phosphorylation of the inhibitory site Thr-696, probably mediated by PRKG1. Phosphorylation at Ser-445, Ser-472 and Ser-910 by NUAK1 promotes interaction with 14-3-3, leading to inhibit interaction with myosin light chain MLC2, preventing dephosphorylation of MLC2. May be phosphorylated at Thr-696 by DMPK; may inhibit the myosin phosphatase activity. Phosphorylated at Ser-473 by CDK1 during mitosis, creating docking sites for the POLO box domains of PLK1. Subsequently, PLK1 binds and phosphorylates PPP1R12A. In terms of tissue distribution, expressed in striated muscles, specifically in type 2a fibers (at protein level).

The protein localises to the cytoplasm. It localises to the cytoskeleton. Its subcellular location is the stress fiber. Its function is as follows. Key regulator of protein phosphatase 1C (PPP1C). Mediates binding to myosin. As part of the PPP1C complex, involved in dephosphorylation of PLK1. Capable of inhibiting HIF1AN-dependent suppression of HIF1A activity. The polypeptide is Protein phosphatase 1 regulatory subunit 12A (Homo sapiens (Human)).